The following is a 612-amino-acid chain: Elongation factor 4 (612 aa).

The tr-type G domain occupies 11–193; it reads KHIRNFSIVA…RIVTDISAPT (183 aa). GTP-binding positions include 23–28 and 140–143; these read DHGKST and NKID.

It belongs to the TRAFAC class translation factor GTPase superfamily. Classic translation factor GTPase family. LepA subfamily.

It is found in the cell membrane. The catalysed reaction is GTP + H2O = GDP + phosphate + H(+). Functionally, required for accurate and efficient protein synthesis under certain stress conditions. May act as a fidelity factor of the translation reaction, by catalyzing a one-codon backward translocation of tRNAs on improperly translocated ribosomes. Back-translocation proceeds from a post-translocation (POST) complex to a pre-translocation (PRE) complex, thus giving elongation factor G a second chance to translocate the tRNAs correctly. Binds to ribosomes in a GTP-dependent manner. This is Elongation factor 4 from Lactobacillus delbrueckii subsp. bulgaricus (strain ATCC 11842 / DSM 20081 / BCRC 10696 / JCM 1002 / NBRC 13953 / NCIMB 11778 / NCTC 12712 / WDCM 00102 / Lb 14).